Reading from the N-terminus, the 139-residue chain is Large ribosomal subunit protein uL14A (139 aa).

This sequence belongs to the universal ribosomal protein uL14 family. As to quaternary structure, component of the large ribosomal subunit (LSU). Mature yeast ribosomes consist of a small (40S) and a large (60S) subunit. The 40S small subunit contains 1 molecule of ribosomal RNA (18S rRNA) and at least 33 different proteins. The large 60S subunit contains 3 rRNA molecules (25S, 5.8S and 5S rRNA) and at least 46 different proteins.

The protein resides in the cytoplasm. It is found in the nucleus. In terms of biological role, component of the ribosome, a large ribonucleoprotein complex responsible for the synthesis of proteins in the cell. The small ribosomal subunit (SSU) binds messenger RNAs (mRNAs) and translates the encoded message by selecting cognate aminoacyl-transfer RNA (tRNA) molecules. The large subunit (LSU) contains the ribosomal catalytic site termed the peptidyl transferase center (PTC), which catalyzes the formation of peptide bonds, thereby polymerizing the amino acids delivered by tRNAs into a polypeptide chain. The nascent polypeptides leave the ribosome through a tunnel in the LSU and interact with protein factors that function in enzymatic processing, targeting, and the membrane insertion of nascent chains at the exit of the ribosomal tunnel. In Schizosaccharomyces pombe (strain 972 / ATCC 24843) (Fission yeast), this protein is Large ribosomal subunit protein uL14A (rpl2301).